Consider the following 584-residue polypeptide: Interferon regulatory factor 2-binding protein 1 (584 aa).

Residues 60 to 127 (VLPEGRSPGP…SGRLPLPSPA (68 aa)) are disordered. Phosphoserine is present on residues S66 and S125. R177 carries the post-translational modification Omega-N-methylarginine. Phosphoserine is present on S186. Positions 197–217 (EKEKQQRNADCLAELNEAMRG) form a coiled coil. A Glycyl lysine isopeptide (Lys-Gly) (interchain with G-Cter in SUMO2) cross-link involves residue K227. The interval 346 to 420 (PAEALPQQYP…PYSAETPGVP (75 aa)) is disordered. A compositionally biased stretch (pro residues) spans 354–369 (YPEPAPAALCGPPPRA). Phosphoserine is present on residues S371, S384, S421, and S436. Residues 433–495 (LGHSPKDPGG…VSGGGSGTGA (63 aa)) are disordered. K438 participates in a covalent cross-link: Glycyl lysine isopeptide (Lys-Gly) (interchain with G-Cter in SUMO2). A compositionally biased stretch (low complexity) spans 449-463 (AGGASPAASSTAQPP). Phosphoserine occurs at positions 453 and 457. The segment at 503–550 (CTLCRERLEDTHFVQCPSVPGHKFCFPCSREFIKAQGPAGEVYCPSGD) adopts an RING-type; degenerate zinc-finger fold. The tract at residues 503–550 (CTLCRERLEDTHFVQCPSVPGHKFCFPCSREFIKAQGPAGEVYCPSGD) is cys-rich.

It belongs to the IRF2BP family. As to quaternary structure, interacts with IRF2. Part of a corepressor complex containing IRF2 and IRF2BP2. Interacts with JDP2.

It localises to the nucleus. It catalyses the reaction S-ubiquitinyl-[E2 ubiquitin-conjugating enzyme]-L-cysteine + [acceptor protein]-L-lysine = [E2 ubiquitin-conjugating enzyme]-L-cysteine + N(6)-ubiquitinyl-[acceptor protein]-L-lysine.. Its function is as follows. Acts as a transcriptional corepressor in a IRF2-dependent manner; this repression is not mediated by histone deacetylase activities. May act as an E3 ligase towards JDP2, enhancing its polyubiquitination. Represses ATF2-dependent transcriptional activation. The polypeptide is Interferon regulatory factor 2-binding protein 1 (IRF2BP1) (Homo sapiens (Human)).